The chain runs to 222 residues: Neurotrophic factor BDNF precursor form (222 aa).

Residues 1–4 (CMKA) form the signal peptide. Positions 5-113 (APMKEVSVRG…AANMSMRVRR (109 aa)) are excised as a propeptide. N-linked (GlcNAc...) asparagine glycosylation is present at Asn-106. Cystine bridges form between Cys-126-Cys-193 and Cys-171-Cys-222.

This sequence belongs to the NGF-beta family.

It is found in the secreted. Functionally, promotes the survival of neuronal populations that are all located either in the central nervous system or directly connected to it. In Xenopeltis unicolor (Sunbeam snake), this protein is Neurotrophic factor BDNF precursor form (BDNF).